The following is a 371-amino-acid chain: Glycosyltransferase 8 domain-containing protein 1 (371 aa).

Topologically, residues 1–7 are cytoplasmic; it reads MSFRKVN. Residues 8-28 form a helical; Signal-anchor for type II membrane protein membrane-spanning segment; that stretch reads IVILVLAVALFLLVLHHNFLG. The Lumenal segment spans residues 29–371; sequence LSSLLRNEVS…RRHVEISNTK (343 aa). Residues N103 and N257 are each glycosylated (N-linked (GlcNAc...) asparagine).

The protein belongs to the glycosyltransferase 8 family.

It is found in the membrane. This Bos taurus (Bovine) protein is Glycosyltransferase 8 domain-containing protein 1 (GLT8D1).